Reading from the N-terminus, the 318-residue chain is Sensor histidine kinase NatK (318 aa).

3 consecutive transmembrane segments (helical) span residues 4 to 24 (LFQC…AAAF), 27 to 47 (STAA…LYIW), and 72 to 82 (VGVVLIGTDIM). Residues 132-318 (RNHDTMKHIT…RLEIKIPFQK (187 aa)) enclose the Histidine kinase domain. His134 is modified (phosphohistidine; by autocatalysis).

It is found in the cell membrane. The enzyme catalyses ATP + protein L-histidine = ADP + protein N-phospho-L-histidine.. Functionally, member of the two-component regulatory system NatK/NatR that positively regulates the expression of the natAB operon. Potentially phosphorylates NatR. This Bacillus subtilis (strain 168) protein is Sensor histidine kinase NatK.